A 251-amino-acid chain; its full sequence is Eukaryotic translation initiation factor 3 subunit K (251 aa).

The region spanning 46–224 is the PCI domain; the sequence is FDCYANLALL…VKVPTNKENE (179 aa).

This sequence belongs to the eIF-3 subunit K family. In terms of assembly, component of the eukaryotic translation initiation factor 3 (eIF-3) complex.

It is found in the cytoplasm. Its function is as follows. Component of the eukaryotic translation initiation factor 3 (eIF-3) complex, which is involved in protein synthesis of a specialized repertoire of mRNAs and, together with other initiation factors, stimulates binding of mRNA and methionyl-tRNAi to the 40S ribosome. The eIF-3 complex specifically targets and initiates translation of a subset of mRNAs involved in cell proliferation. This is Eukaryotic translation initiation factor 3 subunit K from Aspergillus oryzae (strain ATCC 42149 / RIB 40) (Yellow koji mold).